The primary structure comprises 1027 residues: Kinesin heavy chain isoform 5A (1027 aa).

At Ala-2 the chain carries N-acetylalanine. In terms of domain architecture, Kinesin motor spans 9–327 (SIKVLCRFRP…LMFGQRAKTI (319 aa)). 86–93 (GQTSSGKT) serves as a coordination point for ATP. A microtubule-binding region spans residues 174 to 315 (VSSPEEILDV…PSSYNDAETK (142 aa)). A necessary for interaction with ZFYVE27 region spans residues 271 to 361 (EGTKSYVPYR…KTKAQKETIA (91 aa)). A coiled-coil region spans residues 331 to 905 (ASVNLELTAE…EVDRIKEAVR (575 aa)). An interaction with BICD2 region spans residues 353–1027 (TKAQKETIAK…FPLHQETAAS (675 aa)). The residue at position 397 (Thr-397) is a Phosphothreonine. The disordered stretch occupies residues 906–936 (YKSSGKRGHSAQIAKPVRPGHYPASSPTNPY). The segment at 907–1027 (KSSGKRGHSA…FPLHQETAAS (121 aa)) is globular.

Belongs to the TRAFAC class myosin-kinesin ATPase superfamily. Kinesin family. Kinesin subfamily. Oligomer composed of two heavy chains and two light chains. Interacts with GRIP1. Interacts with FMR1 (via C-terminus); this interaction is increased in a mGluR-dependent manner. Interacts with BORCS5. Interacts with ZFYVE27. Interacts with VAPA, VAPB, SURF4, RAB11A (GDP-bound form), RAB11B (GDP-bound form) and RTN3 in a ZFYVE27-dependent manner. Interacts with BICD2. Interacts with DTNB. Expressed in brain.

The protein resides in the cytoplasm. Its subcellular location is the perinuclear region. It is found in the cytoskeleton. The protein localises to the perikaryon. The catalysed reaction is ATP + H2O + a kinesin associated with a microtubule at position (n) = ADP + phosphate a kinesin associated with a microtubule at position (n+1, toward the plus end).. In terms of biological role, microtubule-dependent motor required for slow axonal transport of neurofilament proteins (NFH, NFM and NFL). Can induce formation of neurite-like membrane protrusions in non-neuronal cells in a ZFYVE27-dependent manner. The ZFYVE27-KIF5A complex contributes to the vesicular transport of VAPA, VAPB, SURF4, RAB11A, RAB11B and RTN3 proteins in neurons. Required for anterograde axonal transportation of MAPK8IP3/JIP3 which is essential for MAPK8IP3/JIP3 function in axon elongation. The sequence is that of Kinesin heavy chain isoform 5A from Rattus norvegicus (Rat).